Here is a 136-residue protein sequence, read N- to C-terminus: Protein NrdI (136 aa).

This sequence belongs to the NrdI family.

Functionally, probably involved in ribonucleotide reductase function. This Salmonella arizonae (strain ATCC BAA-731 / CDC346-86 / RSK2980) protein is Protein NrdI.